A 284-amino-acid chain; its full sequence is Isopentenyl-diphosphate Delta-isomerase II, chloroplastic (284 aa).

The N-terminal 45 residues, 1 to 45, are a transit peptide targeting the chloroplast; it reads MSASSLFNLPLIRLRSLALSSSFSSFRFAHRPLSSISPRKLPNFR. At Ala-46 the chain carries N-acetylalanine. Lys-88 serves as a coordination point for substrate. Residues His-92 and His-104 each contribute to the Mg(2+) site. The Nudix hydrolase domain maps to 102 to 254; that stretch reads LLHRAFSVFL…GLKLSPWFRL (153 aa). Residues Arg-123 and Lys-127 each coordinate substrate. Residue Cys-139 is part of the active site. Ser-140 contacts substrate. The Nudix box signature appears at 140–170; it reads SHPLYRESELIQDNALGVRNAAQRKLLDELG. 2 residues coordinate Mg(2+): Glu-199 and Glu-201. Glu-201 is a catalytic residue.

The protein belongs to the IPP isomerase type 1 family. Mg(2+) serves as cofactor.

Its subcellular location is the plastid. The protein localises to the chloroplast. The catalysed reaction is isopentenyl diphosphate = dimethylallyl diphosphate. It participates in isoprenoid biosynthesis; dimethylallyl diphosphate biosynthesis; dimethylallyl diphosphate from isopentenyl diphosphate: step 1/1. Its pathway is porphyrin-containing compound metabolism; chlorophyll biosynthesis. In terms of biological role, catalyzes the 1,3-allylic rearrangement of the homoallylic substrate isopentenyl (IPP) to its highly electrophilic allylic isomer, dimethylallyl diphosphate (DMAPP). The chain is Isopentenyl-diphosphate Delta-isomerase II, chloroplastic (IPP2) from Arabidopsis thaliana (Mouse-ear cress).